We begin with the raw amino-acid sequence, 1145 residues long: Structure-specific endonuclease subunit SLX4 (1145 aa).

The interval 48 to 108 (ADIPVQPDPP…GKSKQQPSIS (61 aa)) is disordered. A coiled-coil region spans residues 321 to 372 (ERETQKCRQLRQQHELVYAELERYYGDPQKLEEEVMQELDELEKLVADNMIE). The span at 382 to 393 (EAESSSTGSSPS) shows a compositional bias: low complexity. 3 disordered regions span residues 382-442 (EAES…EDEP), 613-634 (QSSH…SSFS), and 666-689 (SAEK…DLTQ). Residues 395–410 (EPPDKRPKMTMEDKEN) show a composition bias toward basic and acidic residues. Polar residues-rich tracts occupy residues 411–430 (LQPT…TRCT), 613–633 (QSSH…SSSF), and 678–689 (YKQSDASVDLTQ).

This sequence belongs to the SLX4 family. As to quaternary structure, forms a heterodimer with SLX1. Interacts with mei-9; catalytic subunit of the MEI-9-ERCC1 endonuclease.

The protein resides in the nucleus. Regulatory subunit that interacts with and increases the activity of different structure-specific endonucleases. Has several distinct roles in protecting genome stability by resolving diverse forms of deleterious DNA structures originating from replication and recombination intermediates and from DNA damage. Component of the SLX1-SLX4 structure-specific endonuclease that resolves DNA secondary structures generated during DNA repair and recombination. Has endonuclease activity towards branched DNA substrates, introducing single-strand cuts in duplex DNA close to junctions with ss-DNA. Interacts with the structure-specific MEI-9-ERCC1 endonuclease to generate meiotic crossovers. This chain is Structure-specific endonuclease subunit SLX4 (mus312), found in Drosophila melanogaster (Fruit fly).